Consider the following 188-residue polypeptide: Elongation factor P (188 aa).

This sequence belongs to the elongation factor P family.

It localises to the cytoplasm. It participates in protein biosynthesis; polypeptide chain elongation. In terms of biological role, involved in peptide bond synthesis. Stimulates efficient translation and peptide-bond synthesis on native or reconstituted 70S ribosomes in vitro. Probably functions indirectly by altering the affinity of the ribosome for aminoacyl-tRNA, thus increasing their reactivity as acceptors for peptidyl transferase. In Chlorobium limicola (strain DSM 245 / NBRC 103803 / 6330), this protein is Elongation factor P.